Consider the following 581-residue polypeptide: MGEKMAEEERFPNTTHEGFNVTLHTTLVVTTKLVLPTPGKPILPVQTGEQAQQEEQSSGMTIFFSLLVLAICIILVHLLIRYRLHFLPESVAVVSLGILMGAVIKIIEFKKLANWKEEEMFRPNMFFLLLLPPIIFESGYSLHKGNFFQNIGSITLFAVFGTAISAFVVGGGIYFLGQADVISKLNMTDSFAFGSLISAVDPVATIAIFNALHVDPVLNMLVFGESILNDAVSIVLTNTAEGLTRKNMSDVSGWQTFLQALDYFLKMFFGSAALGTLTGLISALVLKHIDLRKTPSLEFGMMIIFAYLPYGLAEGISLSGIMAILFSGIVMSHYTHHNLSPVTQILMQQTLRTVAFLCETCVFAFLGLSIFSFPHKFEISFVIWCIVLVLFGRAVNIFPLSYLLNFFRDHKITPKMMFIMWFSGLRGAIPYALSLHLDLEPMEKRQLIGTTTIVIVLFTILLLGGSTMPLIRLMDIEDAKAHRRNKKDVNLSKTEKMGNTVESEHLSELTEEEYEAHYIRRQDLKGFVWLDAKYLNPFFTRRLTQEDLHHGRIQMKTLTNKWYEEVRQGPSGSEDDEQELL.

11 helical membrane-spanning segments follow: residues Met60–Ile80, Leu84–Ile104, Pro123–His143, Leu156–Leu176, Phe191–Ala211, Phe264–Leu284, Gly311–Met331, Val354–Pro374, Ile379–Pro399, Met417–Leu437, and Thr451–Ile471. Position 510 is a phosphothreonine (Thr510). A phosphoserine mark is found at Ser571 and Ser573.

It belongs to the monovalent cation:proton antiporter 1 (CPA1) transporter (TC 2.A.36) family. Ubiquitous. Strongly expressed in skeletal muscle and kidney. Detected throughout the entire gastrointestinal tract, with high expression detected in stomach, duodenum and ascending colon.

It is found in the golgi apparatus membrane. Its subcellular location is the golgi apparatus. The protein resides in the trans-Golgi network membrane. It localises to the endosome. The protein localises to the multivesicular body membrane. It is found in the apical cell membrane. Its subcellular location is the cytoplasmic vesicle. The protein resides in the secretory vesicle. It localises to the acrosome. The catalysed reaction is Na(+)(in) + H(+)(out) = Na(+)(out) + H(+)(in). Its activity is regulated as follows. HOE642 inhibits SLC9A8 activity. Functionally, na(+)/H(+) antiporter. Mediates the electoneutral exchange of intracellular H(+) ions for extracellular Na(+) in 1:1 stoichiometry. Acts as an Na(+)/H(+) exchanger in the trans-Golgi. Contributes to the regulation of pH regulation of Golgi apparatus, and consequently, in protein trafficking and endosomal morphology. In germ cells, plays a crucial role in acrosome biogenesis and sperm development, probably by playing a role in the fusion of the Golgi-derived vesicles that form the acrosomal cap. Can also be active at the cell surface of specialized cells. In the small intestine, at the cell membrane, plays a major physiological role in transepithelial absorption of Na(+) and regulates intracellular pH homeostasis of intestinal epithelial cells. Acts as an important regulator of mucosal integrity in the intestine and in the stomach, could mediate the pH fluctuation necessary for mucin exocytosis or assist membrane trafficking of other proteins. Plays a role in photoreceptor survival and in the maintenance of intracellular pH homeostasis in retinal pigment epithelium (RPE cells). This chain is Sodium/hydrogen exchanger 8, found in Homo sapiens (Human).